A 462-amino-acid chain; its full sequence is Putative ABC transporter A445L (462 aa).

Belongs to the protein kinase superfamily. ADCK protein kinase family.

This is Putative ABC transporter A445L from Chlorella (PBCV-1).